We begin with the raw amino-acid sequence, 226 residues long: 7-cyano-7-deazaguanine synthase (226 aa).

ATP is bound at residue 8-18; the sequence is ISGGLDSTTCL. 4 residues coordinate Zn(2+): Cys188, Cys198, Cys201, and Cys204.

This sequence belongs to the QueC family. It depends on Zn(2+) as a cofactor.

It catalyses the reaction 7-carboxy-7-deazaguanine + NH4(+) + ATP = 7-cyano-7-deazaguanine + ADP + phosphate + H2O + H(+). It functions in the pathway purine metabolism; 7-cyano-7-deazaguanine biosynthesis. In terms of biological role, catalyzes the ATP-dependent conversion of 7-carboxy-7-deazaguanine (CDG) to 7-cyano-7-deazaguanine (preQ(0)). The sequence is that of 7-cyano-7-deazaguanine synthase from Coxiella burnetii (strain Dugway 5J108-111).